The following is a 208-amino-acid chain: Uracil phosphoribosyltransferase (208 aa).

Residues arginine 78, arginine 103, and 130 to 138 (DPMLATGGS) each bind 5-phospho-alpha-D-ribose 1-diphosphate. Uracil-binding positions include isoleucine 193 and 198–200 (GDA). A 5-phospho-alpha-D-ribose 1-diphosphate-binding site is contributed by aspartate 199.

Belongs to the UPRTase family. Mg(2+) is required as a cofactor.

It catalyses the reaction UMP + diphosphate = 5-phospho-alpha-D-ribose 1-diphosphate + uracil. It participates in pyrimidine metabolism; UMP biosynthesis via salvage pathway; UMP from uracil: step 1/1. Allosterically activated by GTP. In terms of biological role, catalyzes the conversion of uracil and 5-phospho-alpha-D-ribose 1-diphosphate (PRPP) to UMP and diphosphate. This is Uracil phosphoribosyltransferase from Shewanella frigidimarina (strain NCIMB 400).